Here is a 44-residue protein sequence, read N- to C-terminus: Photosystem II reaction center protein K (44 aa).

Residues 1–7 (MESLLLA) constitute a propeptide that is removed on maturation. A helical transmembrane segment spans residues 23–43 (FPVIPVFFLLLAFVWQAAVGF).

It belongs to the PsbK family. PSII is composed of 1 copy each of membrane proteins PsbA, PsbB, PsbC, PsbD, PsbE, PsbF, PsbH, PsbI, PsbJ, PsbK, PsbL, PsbM, PsbT, PsbX, PsbY, PsbZ, Psb30/Ycf12, at least 3 peripheral proteins of the oxygen-evolving complex and a large number of cofactors. It forms dimeric complexes.

Its subcellular location is the plastid. It localises to the chloroplast thylakoid membrane. One of the components of the core complex of photosystem II (PSII). PSII is a light-driven water:plastoquinone oxidoreductase that uses light energy to abstract electrons from H(2)O, generating O(2) and a proton gradient subsequently used for ATP formation. It consists of a core antenna complex that captures photons, and an electron transfer chain that converts photonic excitation into a charge separation. This chain is Photosystem II reaction center protein K, found in Thalassiosira pseudonana (Marine diatom).